A 125-amino-acid chain; its full sequence is Large ribosomal subunit protein bL12 (125 aa).

This sequence belongs to the bacterial ribosomal protein bL12 family. In terms of assembly, homodimer. Part of the ribosomal stalk of the 50S ribosomal subunit. Forms a multimeric L10(L12)X complex, where L10 forms an elongated spine to which 2 to 4 L12 dimers bind in a sequential fashion. Binds GTP-bound translation factors.

Its function is as follows. Forms part of the ribosomal stalk which helps the ribosome interact with GTP-bound translation factors. Is thus essential for accurate translation. The chain is Large ribosomal subunit protein bL12 from Bradyrhizobium sp. (strain ORS 278).